The primary structure comprises 790 residues: Vacuolar protein sorting-associated protein 35C (790 aa).

Residue Met1 is modified to N-acetylmethionine.

The protein belongs to the VPS35 family. In terms of assembly, component of the retromer complex which consists of VPS29 (MAG1), VPS26 (VPS26A or VPS26B), VPS35 (VPS35A or VPS35B or VPS35C), VPS5/17 (SNX1 or SNX2A or SNX2B). Component of a retromer subcomplex consisting of VPS29 (MAG1), VPS26 (VPS26A or VPS26B), VPS35 (VPS35A or VPS35B or VPS35C).

The protein localises to the cytoplasm. It is found in the endosome membrane. It localises to the prevacuolar compartment membrane. The protein resides in the golgi apparatus. Its subcellular location is the trans-Golgi network membrane. In terms of biological role, plays a role in vesicular protein sorting. Component of the membrane-associated retromer complex which is essential in endosome-to-Golgi retrograde transport. Also involved in the efficient sorting of seed storage proteins. The VPS29-VPS26-VPS35 subcomplex may be involved in recycling of specific cargos from endosome to the plasma membrane. The protein is Vacuolar protein sorting-associated protein 35C (VPS35C) of Arabidopsis thaliana (Mouse-ear cress).